A 394-amino-acid chain; its full sequence is Saposin-like protein 11 (394 aa).

Positions 1–18 are cleaved as a signal peptide; sequence MSVFRFLLFLSLLVGSNA. N-linked (GlcNAc...) asparagine glycans are attached at residues Asn25 and Asn272. Residues 306-394 enclose the Saposin B-type domain; it reads GNMVCDICEK…SFCKHVPFCK (89 aa). Intrachain disulfides connect Cys310/Cys393, Cys313/Cys387, and Cys343/Cys359.

In Caenorhabditis elegans, this protein is Saposin-like protein 11 (spp-11).